A 556-amino-acid chain; its full sequence is Formate--tetrahydrofolate ligase (556 aa).

An ATP-binding site is contributed by T65–T72.

Belongs to the formate--tetrahydrofolate ligase family.

It carries out the reaction (6S)-5,6,7,8-tetrahydrofolate + formate + ATP = (6R)-10-formyltetrahydrofolate + ADP + phosphate. It participates in one-carbon metabolism; tetrahydrofolate interconversion. This is Formate--tetrahydrofolate ligase from Heliobacterium modesticaldum (strain ATCC 51547 / Ice1).